We begin with the raw amino-acid sequence, 432 residues long: MTELISIKDSSKHVDQKVKMHVWLTDKRSSGKIIFLQLRDGTAFFQGVVRKNDVSEEVFEAAKSLRQEASFYITGTVHEDKRSHFGYEIQISDLEIVSNNEGYPIGNKEHGVDFLLDNRHLWLRSKRPFAIMQIRNTMFKATVDFFEKEGFIKFDAPIFMHSAPEGTTQLFHVEYFNNDAYLSQSGQLYGEAGAMAYGKIFTFGPTFRAEESKGRRHMTEFWMMEPEMAWMHQDESLDIQERYLAYMVKQVLENNEYELRILGRDPEKLRPTTEGNFTRLPYDDAIKMLQEAGRDIKWGDDFGAPDEGYISEQFDRPVFIVNYPTTIKPFYMKKNPDNPKEYLCADVIAPEGYGEIFGGSEREGNYEILKKQIEEAGLNLEDYQWYLDLRKFGGVPHSGFGMGFERTIAWICKLDHIREAIPFPRLINRMQP.

The protein belongs to the class-II aminoacyl-tRNA synthetase family. As to quaternary structure, homodimer.

The protein resides in the cytoplasm. The enzyme catalyses tRNA(Asn) + L-asparagine + ATP = L-asparaginyl-tRNA(Asn) + AMP + diphosphate + H(+). This Lactobacillus gasseri (strain ATCC 33323 / DSM 20243 / BCRC 14619 / CIP 102991 / JCM 1131 / KCTC 3163 / NCIMB 11718 / NCTC 13722 / AM63) protein is Asparagine--tRNA ligase.